We begin with the raw amino-acid sequence, 385 residues long: Circadian-associated transcriptional repressor (385 aa).

Over residues 1–26 (MDSPSSVSSYSSYSLSSSFPTSPVNS) the composition is skewed to low complexity. 3 disordered regions span residues 1-108 (MDSP…SLNT), 203-233 (GGGK…EKMD), and 365-385 (GHRE…LLNL). Basic and acidic residues predominate over residues 33–45 (DSEREDKGAHGPR). Over residues 70 to 79 (VSGNQHTPSH) the composition is skewed to polar residues.

Interacts with PER2, CRY2, BHLHE41, HDAC1 and NR3C1. Interacts with BMAL1.

The protein localises to the nucleus. Its subcellular location is the PML body. Its function is as follows. Transcriptional repressor which forms a negative regulatory component of the circadian clock and acts independently of the circadian transcriptional repressors: CRY1, CRY2 and BHLHE41. In a histone deacetylase-dependent manner represses the transcriptional activator activity of the CLOCK-BMAL1 heterodimer. Abrogates the interaction of BMAL1 with the transcriptional coactivator CREBBP and can repress the histone acetyl-transferase activity of the CLOCK-BMAL1 heterodimer, reducing histone acetylation of its target genes. Rhythmically binds the E-box elements (5'-CACGTG-3') on circadian gene promoters and its occupancy shows circadian oscillation antiphasic to BMAL1. Interacts with the glucocorticoid receptor (NR3C1) and contributes to the repressive function in the glucocorticoid response. In Homo sapiens (Human), this protein is Circadian-associated transcriptional repressor (CIART).